Consider the following 666-residue polypeptide: Probable potassium transport system protein Kup (666 aa).

The next 12 membrane-spanning stretches (helical) occupy residues 16–36 (GFII…LYTI), 58–78 (ISLI…LIAL), 100–120 (PWLI…GALT), 141–161 (IYQN…VLFG), 165–185 (FGTG…FSFL), 221–241 (IFIL…YSDL), 253–273 (WPFV…WILA), 294–314 (VYLV…LISG), 343–363 (LYIP…VLAF), 373–393 (YGLA…YYLI), 399–419 (PILA…FFLA), and 424–444 (FMHG…VMFI).

The protein belongs to the HAK/KUP transporter (TC 2.A.72) family.

The protein resides in the cell membrane. It catalyses the reaction K(+)(in) + H(+)(in) = K(+)(out) + H(+)(out). Functionally, transport of potassium into the cell. Likely operates as a K(+):H(+) symporter. This Streptococcus pyogenes serotype M1 protein is Probable potassium transport system protein Kup.